Consider the following 143-residue polypeptide: UPF0299 membrane protein CGSHiEE_04225 (143 aa).

4 helical membrane passes run 1-21 (MIQKLFLLVRSLVILSIMLSL), 33-52 (VPGSIWGLLLLFLGLTTRVI), 60-80 (GASLLIRFMAVLFVPVSVGII), and 92-112 (ILLVPNIVSTCVTLLVIGFLG).

It belongs to the UPF0299 family.

The protein localises to the cell inner membrane. The protein is UPF0299 membrane protein CGSHiEE_04225 of Haemophilus influenzae (strain PittEE).